Here is a 214-residue protein sequence, read N- to C-terminus: LexA repressor (214 aa).

The segment at residues 28–48 is a DNA-binding region (H-T-H motif); the sequence is IRDIQRELSISSTSVVAYNLR. Active-site for autocatalytic cleavage activity residues include Ser-133 and Lys-172.

This sequence belongs to the peptidase S24 family. Homodimer.

It catalyses the reaction Hydrolysis of Ala-|-Gly bond in repressor LexA.. Represses a number of genes involved in the response to DNA damage (SOS response), including recA and lexA. In the presence of single-stranded DNA, RecA interacts with LexA causing an autocatalytic cleavage which disrupts the DNA-binding part of LexA, leading to derepression of the SOS regulon and eventually DNA repair. The sequence is that of LexA repressor from Herpetosiphon aurantiacus (strain ATCC 23779 / DSM 785 / 114-95).